The sequence spans 278 residues: MGTNDALTSTEDAVTAGANDAPLPAPPEPPRKARRATSRTSDFRVAEQPAFVLHSYPYRETSLIVDVLTRDHGRLALVAKGAKRPHSALRGVLQTFQPLLLSWSGKSEVRTLTGAEWVGGMLPLGGDGLLCGFYANELLVKFCAREDPQPPLFNHYVLTLTRLAHGEPAVQVLRSFERVLLRETGYAMALNRTVARRAVEPERRYVFDPERGVRNADDDVPSHWPVITGQTLLDMEQDDYHRAQTVAQSKTLMRFLLNTYLGGTPLATRQILIDLQNL.

A compositionally biased stretch (polar residues) spans 1-12 (MGTNDALTSTED). The segment at 1-41 (MGTNDALTSTEDAVTAGANDAPLPAPPEPPRKARRATSRTS) is disordered.

The protein belongs to the RecO family.

Functionally, involved in DNA repair and RecF pathway recombination. This Burkholderia orbicola (strain AU 1054) protein is DNA repair protein RecO.